Consider the following 106-residue polypeptide: Large ribosomal subunit protein uL24 (106 aa).

It belongs to the universal ribosomal protein uL24 family. In terms of assembly, part of the 50S ribosomal subunit.

One of two assembly initiator proteins, it binds directly to the 5'-end of the 23S rRNA, where it nucleates assembly of the 50S subunit. In terms of biological role, one of the proteins that surrounds the polypeptide exit tunnel on the outside of the subunit. This Porphyromonas gingivalis (strain ATCC 33277 / DSM 20709 / CIP 103683 / JCM 12257 / NCTC 11834 / 2561) protein is Large ribosomal subunit protein uL24.